The following is a 533-amino-acid chain: Acid-sensing ion channel 2 (533 aa).

Over residues 1 to 16 the composition is skewed to basic and acidic residues; it reads MDLKEACGSEASRETE. Residues 1-23 are disordered; that stretch reads MDLKEACGSEASRETESGGMGSL. The Cytoplasmic segment spans residues 1–68; sequence MDLKEACGSE…STSRRLLWSA (68 aa). A helical transmembrane segment spans residues 69 to 89; sequence ALLASLVLLVLESTERLAYFL. The Extracellular segment spans residues 90–445; it reads SYPHVTSVDA…ETIEQKKAYE (356 aa). 6 cysteine pairs are disulfide-bonded: Cys113-Cys214, Cys310-Cys385, Cys328-Cys381, Cys332-Cys379, Cys341-Cys363, and Cys343-Cys355. N-linked (GlcNAc...) asparagine glycosylation is present at Asn163. 2 N-linked (GlcNAc...) asparagine glycosylation sites follow: Asn386 and Asn413. Residues 446–466 form a helical membrane-spanning segment; the sequence is VAGLLGDIGGQMGLFIGASIL. The GAS motif; ion selectivity filter signature appears at 462–464; it reads GAS. Over 467-533 the chain is Cytoplasmic; the sequence is TLLELFDYAY…TLGTLEEIAC (67 aa).

Belongs to the amiloride-sensitive sodium channel (TC 1.A.6) family. ASIC2 subfamily. Can form homotrimers; probably non-functional. Heterotrimer; could form functional heterotrimers producing channel with specific properties depending on their composition. In terms of tissue distribution, expressed in central nervous system.

It localises to the cell membrane. It catalyses the reaction Na(+)(in) = Na(+)(out). Inhibited by the diuretic drug amiloride. Could form pH-gated heterotrimeric sodium channels that act as postsynaptic excitatory sensors in the nervous system, generating rapid, transient inward currents that fully desensitize upon extracellular acidification. This Danio rerio (Zebrafish) protein is Acid-sensing ion channel 2 (asic2).